The chain runs to 196 residues: MFEFITDEDERGQVGIGTLIVFIAMVLVAAIAAGVLINTAGYLQSKGSATGEEASAQVSNRINIVSAYGNVDTSGSTEVVNYANLTVRQAAGADNINLSKSTIQWIGPDTATTLTYDGTTADAENFTTNSIKGDNADVLVDQSDRIEIVMDAAEITTNGLKAGEEVQLTVTTQYGSKTTYWANVPESLKDKNAVTL.

A propeptide spanning residues 1 to 12 (MFEFITDEDERG) is cleaved from the precursor.

This sequence belongs to the archaeal flagellin family. Post-translationally, glycosylated.

The protein localises to the archaeal flagellum. Functionally, flagellin is the subunit protein which polymerizes to form the filaments of archaeal flagella. The protein is Flagellin B2 (flaB2) of Halobacterium salinarum (strain ATCC 700922 / JCM 11081 / NRC-1) (Halobacterium halobium).